An 87-amino-acid polypeptide reads, in one-letter code: U3-theraphotoxin-Hhn1a 6 (87 aa).

Positions 1 to 24 (MVNMKASMFLTFAGLVLLFVVCYA) are cleaved as a signal peptide. A propeptide spanning residues 25–52 (SESEKKEFPKEMLSSIFAVDNDFKQEER) is cleaved from the precursor. 3 cysteine pairs are disulfide-bonded: C54–C67, C61–C72, and C66–C79.

Belongs to the neurotoxin 10 (Hwtx-1) family. 51 (Hntx-8) subfamily. Hntx-8 sub-subfamily. In terms of tissue distribution, expressed by the venom gland.

It is found in the secreted. Functionally, ion channel inhibitor. The polypeptide is U3-theraphotoxin-Hhn1a 6 (Cyriopagopus hainanus (Chinese bird spider)).